A 453-amino-acid polypeptide reads, in one-letter code: Probable tRNA methyltransferase 9B (453 aa).

Serine 214 bears the Phosphoserine mark.

It belongs to the methyltransferase superfamily.

In terms of biological role, may modify wobble uridines in specific arginine and glutamic acid tRNAs. Acts as a tumor suppressor by promoting the expression of LIN9. The chain is Probable tRNA methyltransferase 9B (TRMT9B) from Bos taurus (Bovine).